Consider the following 366-residue polypeptide: Homeobox-leucine zipper protein HOX21 (366 aa).

2 disordered regions span residues 25 to 81 (QQAA…SSAQ) and 94 to 132 (MLGK…EKKR). Residues 36–48 (HHHHHHHGHHGHH) are compositionally biased toward basic residues. Residues 62–74 (GPPPPPPPHPHNP) show a composition bias toward pro residues. The span at 103-115 (GDGGGGGDEVNGG) shows a compositional bias: gly residues. The homeobox DNA-binding region spans 127–186 (AGEKKRRLNVEQVRTLEKNFELGNKLEPERKMQLARALGLQPRQVAIWFQNRRARWKTKQ). Residues 185–229 (KQLEKDYDALKRQLDAVKAENDALLNHNKKLQAEIVALKGREAAS) form a leucine-zipper region. 2 disordered regions span residues 239–287 (EASC…GGGG) and 312–336 (LHSS…VQAA). Over residues 240–252 (ASCSNRSENSSEI) the composition is skewed to polar residues.

Belongs to the HD-ZIP homeobox family. Class I subfamily. Expressed in seedlings, roots, stems, leaf blades and panicles.

The protein resides in the nucleus. Its function is as follows. Probable transcription factor. This chain is Homeobox-leucine zipper protein HOX21 (HOX21), found in Oryza sativa subsp. japonica (Rice).